The primary structure comprises 114 residues: Cytochrome c oxidase subunit 4B (114 aa).

Transmembrane regions (helical) follow at residues 29–49 (QIVV…AVAT), 56–76 (FAIP…LFFF), and 89–109 (AFMI…MLLL).

This sequence belongs to the cytochrome c oxidase bacterial subunit 4 family.

The protein resides in the cell membrane. The catalysed reaction is 4 Fe(II)-[cytochrome c] + O2 + 8 H(+)(in) = 4 Fe(III)-[cytochrome c] + 2 H2O + 4 H(+)(out). The sequence is that of Cytochrome c oxidase subunit 4B (ctaF) from Alkalihalophilus pseudofirmus (strain ATCC BAA-2126 / JCM 17055 / OF4) (Bacillus pseudofirmus).